A 113-amino-acid chain; its full sequence is Large ribosomal subunit protein bL19 (113 aa).

Belongs to the bacterial ribosomal protein bL19 family.

This protein is located at the 30S-50S ribosomal subunit interface and may play a role in the structure and function of the aminoacyl-tRNA binding site. The polypeptide is Large ribosomal subunit protein bL19 (Moorella thermoacetica (strain ATCC 39073 / JCM 9320)).